A 148-amino-acid polypeptide reads, in one-letter code: Small ribosomal subunit protein bS6 (148 aa).

Positions 96–148 are disordered; it reads HEEGQSAMLTRRDDRRERDGDDRPRRREGGFDRGDRGDRSPRRPRDNEAGEGA.

This sequence belongs to the bacterial ribosomal protein bS6 family.

In terms of biological role, binds together with bS18 to 16S ribosomal RNA. In Brucella suis (strain ATCC 23445 / NCTC 10510), this protein is Small ribosomal subunit protein bS6.